Here is a 351-residue protein sequence, read N- to C-terminus: 3-hydroxy-4-methyl-anthranilyl-[aryl-carrier protein] 5-monooxygenase (351 aa).

The protein belongs to the aromatic-ring hydroxylase family. The cofactor is FAD.

It carries out the reaction 3-hydroxy-4-methylanthranilyl-[aryl-carrier protein] + NADH + O2 + H(+) = 3,5-dihydroxy-4-methylanthranilyl-[aryl-carrier protein] + NAD(+) + H2O. It functions in the pathway antibiotic biosynthesis. Involved in the biosynthesis of the antitumor antibiotic sibiromycin. Hydroxylates the C5 position of the peptidyl carrier protein (PCP)-bound 4-methyl-3-hydroxyanthranilic acid (4-MHA or 3H4MAA), leading to the formation of the fully substituted anthranilate moiety found in sibiromycin. The chain is 3-hydroxy-4-methyl-anthranilyl-[aryl-carrier protein] 5-monooxygenase from Streptosporangium sibiricum.